Consider the following 280-residue polypeptide: MALKSYKPTTPGQRGLVLIDRSELWKGRPVKALTEGLSKHGGRNNTGRITMRRKGGGAKRLYRIVDFKRNKMDVAATVERIEYDPNRTAFIALVKYEDGEQAYILAPQRLAVGDTVVASQKADIKPGNAMPFSGMPIGTIIHNIEMKPGKGGQIARAAGTYAQFVGRDGGYAQIRLSSGELRLVRQECMATVGAVSNPDNSNQNYGKAGRMRHKGVRPSVRGVVMNPIDHPHGGGEGRTSGGRHPVTPWGKPTKGAKTRNKKKASSQLIIRSRHAKKKGR.

The tract at residues 226–280 (NPIDHPHGGGEGRTSGGRHPVTPWGKPTKGAKTRNKKKASSQLIIRSRHAKKKGR) is disordered. 2 stretches are compositionally biased toward basic residues: residues 254–264 (KGAKTRNKKKA) and 271–280 (RSRHAKKKGR).

It belongs to the universal ribosomal protein uL2 family. As to quaternary structure, part of the 50S ribosomal subunit. Forms a bridge to the 30S subunit in the 70S ribosome.

In terms of biological role, one of the primary rRNA binding proteins. Required for association of the 30S and 50S subunits to form the 70S ribosome, for tRNA binding and peptide bond formation. It has been suggested to have peptidyltransferase activity; this is somewhat controversial. Makes several contacts with the 16S rRNA in the 70S ribosome. This is Large ribosomal subunit protein uL2 from Roseobacter denitrificans (strain ATCC 33942 / OCh 114) (Erythrobacter sp. (strain OCh 114)).